The following is a 228-amino-acid chain: UPF0758 protein stu1465 (228 aa).

The MPN domain occupies 103–225 (QIMSSQQVAR…YYSFREERED (123 aa)). His174, His176, and Asp187 together coordinate Zn(2+). The JAMM motif motif lies at 174–187 (HNHPSGEAYPSRND).

It belongs to the UPF0758 family.

This Streptococcus thermophilus (strain ATCC BAA-250 / LMG 18311) protein is UPF0758 protein stu1465.